A 1217-amino-acid polypeptide reads, in one-letter code: ATP-dependent helicase/nuclease subunit A (1217 aa).

Positions 10 to 475 (VIWTDAQWQS…IDLSQNFRSR (466 aa)) constitute a UvrD-like helicase ATP-binding domain. 31–38 (AAAGSGKT) contributes to the ATP binding site. Residues 476-786 (KEVLSTTNYI…RMMTIHSSKG (311 aa)) enclose the UvrD-like helicase C-terminal domain.

The protein belongs to the helicase family. AddA subfamily. As to quaternary structure, heterodimer of AddA and AddB/RexB. Requires Mg(2+) as cofactor.

The enzyme catalyses Couples ATP hydrolysis with the unwinding of duplex DNA by translocating in the 3'-5' direction.. It carries out the reaction ATP + H2O = ADP + phosphate + H(+). The heterodimer acts as both an ATP-dependent DNA helicase and an ATP-dependent, dual-direction single-stranded exonuclease. Recognizes the chi site generating a DNA molecule suitable for the initiation of homologous recombination. The AddA nuclease domain is required for chi fragment generation; this subunit has the helicase and 3' -&gt; 5' nuclease activities. The chain is ATP-dependent helicase/nuclease subunit A from Staphylococcus aureus (strain MW2).